The chain runs to 208 residues: Urease accessory protein UreG 1 (208 aa).

GTP is bound at residue 14–21 (GPVGSGKT).

Belongs to the SIMIBI class G3E GTPase family. UreG subfamily. In terms of assembly, homodimer. UreD, UreF and UreG form a complex that acts as a GTP-hydrolysis-dependent molecular chaperone, activating the urease apoprotein by helping to assemble the nickel containing metallocenter of UreC. The UreE protein probably delivers the nickel.

It is found in the cytoplasm. Facilitates the functional incorporation of the urease nickel metallocenter. This process requires GTP hydrolysis, probably effectuated by UreG. This Brucella ovis (strain ATCC 25840 / 63/290 / NCTC 10512) protein is Urease accessory protein UreG 1.